A 159-amino-acid polypeptide reads, in one-letter code: NADH-quinone oxidoreductase subunit I (159 aa).

4Fe-4S ferredoxin-type domains are found at residues 51 to 80 (RRYENGEERCIACKLCEAVCPAQAIVIESD) and 90 to 119 (TRYDIDMTKCIYCGLCQEACPVDAIVEGPN). 8 residues coordinate [4Fe-4S] cluster: Cys-60, Cys-63, Cys-66, Cys-70, Cys-99, Cys-102, Cys-105, and Cys-109.

Belongs to the complex I 23 kDa subunit family. NDH-1 is composed of 14 different subunits. Subunits NuoA, H, J, K, L, M, N constitute the membrane sector of the complex. [4Fe-4S] cluster serves as cofactor.

It localises to the cell inner membrane. The enzyme catalyses a quinone + NADH + 5 H(+)(in) = a quinol + NAD(+) + 4 H(+)(out). In terms of biological role, NDH-1 shuttles electrons from NADH, via FMN and iron-sulfur (Fe-S) centers, to quinones in the respiratory chain. The immediate electron acceptor for the enzyme in this species is believed to be ubiquinone. Couples the redox reaction to proton translocation (for every two electrons transferred, four hydrogen ions are translocated across the cytoplasmic membrane), and thus conserves the redox energy in a proton gradient. The polypeptide is NADH-quinone oxidoreductase subunit I (Rickettsia typhi (strain ATCC VR-144 / Wilmington)).